Reading from the N-terminus, the 663-residue chain is MAQGTLIRVTPEQPTHAVCVLGTLTQLDICSSAPEDCTSFSINASPGVVVDIAHGPPAKKKSTGSSTWPLDPGVEVTLTMKVASGSTGDQKVQISYYGPKTPPVKALLYLTGVEISLCADITRTGKVKPTRAVKDQRTWTWGPCGQGAILLVNCDRDNLESSAMDCEDDEVLDSEDLQDMSLMTLSTKTPKDFFTNHTLVLHVARSEMDKVRVFQATRGKLSSKCSVVLGPKWPSHYLMVPGGKHNMDFYVEALAFPDTDFPGLITLTISLLDTSNLELPEAVVFQDSVVFRVAPWIMTPNTQPPQEVYACSIFENEDFLKSVTTLAMKAKCKLTICPEEENMDDQWMQDEMEIGYIQAPHKTLPVVFDSPRNRGLKEFPIKRVMGPDFGYVTRGPQTGGISGLDSFGNLEVSPPVTVRGKEYPLGRILFGDSCYPSNDSRQMHQALQDFLSAQQVQAPVKLYSDWLSVGHVDEFLSFVPAPDRKGFRLLLASPRSCYKLFQEQQNEGHGEALLFEGIKKKKQQKIKNILSNKTLREHNSFVERCIDWNRELLKRELGLAESDIIDIPQLFKLKEFSKAEAFFPNMVNMLVLGKHLGIPKPFGPVINGRCCLEEKVCSLLEPLGLQCTFINDFFTYHIRHGEVHCGTNVRRKPFSFKWWNMVP.

Ca(2+)-binding residues include Asn153, Asp155, Asp157, Asp165, Asp168, Glu170, Asp176, and Asp179. Residues Arg205, Arg212, and Arg218 each carry the citrulline modification. A Ca(2+)-binding site is contributed by Gln349. Residue Asp350 is part of the active site. The Ca(2+) site is built by Glu351, Glu353, Asp369, and Ser370. Arg372 bears the Citrulline mark. Ca(2+) is bound at residue Asn373. Citrulline occurs at positions 374 and 383. Residue Arg374 participates in substrate binding. Asp388, Phe407, Leu410, and Glu411 together coordinate Ca(2+). Catalysis depends on residues His471 and Asp473. Arg639 lines the substrate pocket. Cys645 is a catalytic residue.

The protein belongs to the protein arginine deiminase family. The cofactor is Ca(2+). Post-translationally, autocitrullination at Arg-372 and Arg-374 inactivates the enzyme. As to expression, expressed in eosinophils and neutrophils, not expressed in peripheral monocytes or lymphocytes.

The protein resides in the cytoplasm. It is found in the nucleus. Its subcellular location is the cytoplasmic granule. It carries out the reaction L-arginyl-[protein] + H2O = L-citrullyl-[protein] + NH4(+). Its activity is regulated as follows. Strongly Inhibited by F-amidine and N-alpha-benzoyl-N5-(2-chloro-1-iminoethyl)-L-ornithine amide (Cl-amidine). These inhibitors are however not specific to PADI4 and also inhibit other members of the family. Incorporation of a carboxylate ortho to the backbone amide of Cl-amidine results in inhibitors with increased specificity for PADI4: N-alpha-(2-carboxyl)benzoyl-N(5)-(2-fluoro-1-iminoethyl)-L-ornithine amide (o-F-amidine) and N-alpha-(2-carboxyl)benzoyl-N(5)-(2-chloro-1-iminoethyl)-L-ornithine amide (o-Cl-amidine). Strongly and specifically inhibited by Thr-Asp-F-amidine (TDFA); other members of the family are not inhibited. Catalyzes the citrullination/deimination of arginine residues of proteins such as histones, thereby playing a key role in histone code and regulation of stem cell maintenance. Citrullinates histone H1 at 'Arg-54' (to form H1R54ci), histone H3 at 'Arg-2', 'Arg-8', 'Arg-17' and/or 'Arg-26' (to form H3R2ci, H3R8ci, H3R17ci, H3R26ci, respectively) and histone H4 at 'Arg-3' (to form H4R3ci). Acts as a key regulator of stem cell maintenance by mediating citrullination of histone H1: citrullination of 'Arg-54' of histone H1 (H1R54ci) results in H1 displacement from chromatin and global chromatin decondensation, thereby promoting pluripotency and stem cell maintenance. Promotes profound chromatin decondensation during the innate immune response to infection in neutrophils by mediating formation of H1R54ci. Required for the formation of neutrophil extracellular traps (NETs); NETs are mainly composed of DNA fibers and are released by neutrophils to bind pathogens during inflammation. Citrullination of histone H3 prevents their methylation by CARM1 and HRMT1L2/PRMT1 and represses transcription. Citrullinates EP300/P300 at 'Arg-2142', which favors its interaction with NCOA2/GRIP1. The sequence is that of Protein-arginine deiminase type-4 (PADI4) from Homo sapiens (Human).